A 565-amino-acid chain; its full sequence is NAD-dependent malic enzyme (565 aa).

The active-site Proton donor is Y104. An NAD(+)-binding site is contributed by R157. K175 acts as the Proton acceptor in catalysis. E246, D247, and D270 together coordinate a divalent metal cation. The NAD(+) site is built by D270 and N418.

Belongs to the malic enzymes family. Homotetramer. Requires Mg(2+) as cofactor. It depends on Mn(2+) as a cofactor.

It catalyses the reaction (S)-malate + NAD(+) = pyruvate + CO2 + NADH. It carries out the reaction oxaloacetate + H(+) = pyruvate + CO2. The sequence is that of NAD-dependent malic enzyme from Escherichia coli O6:H1 (strain CFT073 / ATCC 700928 / UPEC).